Here is a 601-residue protein sequence, read N- to C-terminus: RNA-binding protein MEX3B (601 aa).

2 disordered regions span residues 1–39 and 90–109; these read MPSS…DDQR and GRQG…ISPT. Phosphoserine is present on Ser-4. A compositionally biased stretch (gly residues) spans 13 to 33; sequence GSGGGGGGGGGGGGGGSGGGE. KH domains lie at 98 to 159 and 192 to 253; these read DGDR…RREI and QTTI…REEI. Disordered regions lie at residues 284–332 and 344–448; these read LHHG…TDSY and TSRL…GGAS. Ser-320 bears the Phosphoserine mark. Low complexity-rich tracts occupy residues 320 to 331 and 362 to 371; these read SSSSLGSASTDS and NGNNNNNGNG. Residues 395–404 show a composition bias toward pro residues; that stretch reads DPAPAPPPGT. Residues 420–442 show a composition bias toward low complexity; it reads AAPVSSSCSSSASSSASSSSVVF. The residue at position 494 (Ser-494) is a Phosphoserine. Residues 514–546 are disordered; the sequence is LPGLPSSDTSGSSSSSSSSSSSSSSSSGLRRKG. Over residues 519 to 540 the composition is skewed to low complexity; sequence SSDTSGSSSSSSSSSSSSSSSS. The segment at 550-590 adopts an RING-type zinc-finger fold; sequence CSVCFESEVIAALVPCGHNLFCMECANRICEKSEPECPVCH.

Phosphorylation at Ser-494 creates a docking site for 14-3-3, which stabilizes the protein and modulates its ability to bind RNA.

It is found in the cytoplasm. The protein resides in the nucleus. It localises to the P-body. The protein localises to the cytoplasmic granule. Its function is as follows. RNA-binding protein. May be involved in post-transcriptional regulatory mechanisms. This chain is RNA-binding protein MEX3B (Mex3b), found in Mus musculus (Mouse).